A 155-amino-acid chain; its full sequence is SsrA-binding protein (155 aa).

It belongs to the SmpB family.

It is found in the cytoplasm. In terms of biological role, required for rescue of stalled ribosomes mediated by trans-translation. Binds to transfer-messenger RNA (tmRNA), required for stable association of tmRNA with ribosomes. tmRNA and SmpB together mimic tRNA shape, replacing the anticodon stem-loop with SmpB. tmRNA is encoded by the ssrA gene; the 2 termini fold to resemble tRNA(Ala) and it encodes a 'tag peptide', a short internal open reading frame. During trans-translation Ala-aminoacylated tmRNA acts like a tRNA, entering the A-site of stalled ribosomes, displacing the stalled mRNA. The ribosome then switches to translate the ORF on the tmRNA; the nascent peptide is terminated with the 'tag peptide' encoded by the tmRNA and targeted for degradation. The ribosome is freed to recommence translation, which seems to be the essential function of trans-translation. This Streptococcus pneumoniae (strain 70585) protein is SsrA-binding protein.